Consider the following 238-residue polypeptide: ATP-dependent dethiobiotin synthetase BioD (238 aa).

13 to 18 (EIGKTV) is a binding site for ATP. T17 is a binding site for Mg(2+). K38 is an active-site residue. T42 provides a ligand contact to substrate. The Mg(2+) site is built by R59 and E111. Residues 111 to 114 (EGAG), 175 to 176 (NQ), and 204 to 206 (PLL) contribute to the ATP site.

It belongs to the dethiobiotin synthetase family. In terms of assembly, homodimer. Mg(2+) serves as cofactor.

It is found in the cytoplasm. It carries out the reaction (7R,8S)-7,8-diammoniononanoate + CO2 + ATP = (4R,5S)-dethiobiotin + ADP + phosphate + 3 H(+). Its pathway is cofactor biosynthesis; biotin biosynthesis; biotin from 7,8-diaminononanoate: step 1/2. Its function is as follows. Catalyzes a mechanistically unusual reaction, the ATP-dependent insertion of CO2 between the N7 and N8 nitrogen atoms of 7,8-diaminopelargonic acid (DAPA, also called 7,8-diammoniononanoate) to form a ureido ring. In Geobacillus kaustophilus (strain HTA426), this protein is ATP-dependent dethiobiotin synthetase BioD.